Reading from the N-terminus, the 162-residue chain is Disulfide bond formation protein B (162 aa).

Residues M1–A8 lie on the Cytoplasmic side of the membrane. A helical transmembrane segment spans residues V9–A25. The Periplasmic segment spans residues A26 to L43. C35 and C38 form a disulfide bridge. Residues C44–P60 form a helical membrane-spanning segment. Topologically, residues R61–L67 are cytoplasmic. The helical transmembrane segment at F68 to A85 threads the bilayer. Residues Y86–V141 are Periplasmic-facing. C101 and C128 are disulfide-bonded. A helical transmembrane segment spans residues W142–R160. Residues A161 to K162 are Cytoplasmic-facing.

Belongs to the DsbB family.

It is found in the cell inner membrane. Required for disulfide bond formation in some periplasmic proteins. Acts by oxidizing the DsbA protein. In Neisseria meningitidis serogroup A / serotype 4A (strain DSM 15465 / Z2491), this protein is Disulfide bond formation protein B.